The primary structure comprises 88 residues: Small ribosomal subunit protein uS15 (88 aa).

This sequence belongs to the universal ribosomal protein uS15 family. As to quaternary structure, part of the 30S ribosomal subunit. Forms a bridge to the 50S subunit in the 70S ribosome, contacting the 23S rRNA.

One of the primary rRNA binding proteins, it binds directly to 16S rRNA where it helps nucleate assembly of the platform of the 30S subunit by binding and bridging several RNA helices of the 16S rRNA. Its function is as follows. Forms an intersubunit bridge (bridge B4) with the 23S rRNA of the 50S subunit in the ribosome. This Trichlorobacter lovleyi (strain ATCC BAA-1151 / DSM 17278 / SZ) (Geobacter lovleyi) protein is Small ribosomal subunit protein uS15.